The sequence spans 196 residues: NADH-quinone oxidoreductase subunit I (196 aa).

4Fe-4S ferredoxin-type domains lie at 54 to 84 and 104 to 133; these read LNRW…VEGA and RVYQ…MTNE. Positions 64, 67, 70, 74, 113, 116, 119, and 123 each coordinate [4Fe-4S] cluster.

The protein belongs to the complex I 23 kDa subunit family. As to quaternary structure, NDH-1 is composed of 14 different subunits. Subunits NuoA, H, J, K, L, M, N constitute the membrane sector of the complex. It depends on [4Fe-4S] cluster as a cofactor.

It is found in the cell membrane. The enzyme catalyses a quinone + NADH + 5 H(+)(in) = a quinol + NAD(+) + 4 H(+)(out). NDH-1 shuttles electrons from NADH, via FMN and iron-sulfur (Fe-S) centers, to quinones in the respiratory chain. The immediate electron acceptor for the enzyme in this species is believed to be ubiquinone. Couples the redox reaction to proton translocation (for every two electrons transferred, four hydrogen ions are translocated across the cytoplasmic membrane), and thus conserves the redox energy in a proton gradient. The chain is NADH-quinone oxidoreductase subunit I from Nocardioides sp. (strain ATCC BAA-499 / JS614).